A 307-amino-acid chain; its full sequence is Putative S-adenosyl-L-methionine-dependent methyltransferase Mflv_5025 (307 aa).

S-adenosyl-L-methionine contacts are provided by residues aspartate 130 and aspartate 159–leucine 160.

This sequence belongs to the UPF0677 family.

Functionally, exhibits S-adenosyl-L-methionine-dependent methyltransferase activity. The chain is Putative S-adenosyl-L-methionine-dependent methyltransferase Mflv_5025 from Mycolicibacterium gilvum (strain PYR-GCK) (Mycobacterium gilvum (strain PYR-GCK)).